The sequence spans 277 residues: Diaminopimelate epimerase (277 aa).

Asn-11 and Asn-62 together coordinate substrate. Cys-71 (proton donor) is an active-site residue. Residues 72 to 73, Asn-160, Asn-193, and 211 to 212 each bind substrate; these read GN and ER. Cys-220 serves as the catalytic Proton acceptor. 221-222 lines the substrate pocket; the sequence is GT.

Belongs to the diaminopimelate epimerase family. In terms of assembly, homodimer.

Its subcellular location is the cytoplasm. The catalysed reaction is (2S,6S)-2,6-diaminopimelate = meso-2,6-diaminopimelate. The protein operates within amino-acid biosynthesis; L-lysine biosynthesis via DAP pathway; DL-2,6-diaminopimelate from LL-2,6-diaminopimelate: step 1/1. Functionally, catalyzes the stereoinversion of LL-2,6-diaminopimelate (L,L-DAP) to meso-diaminopimelate (meso-DAP), a precursor of L-lysine. In Methanococcus maripaludis (strain DSM 14266 / JCM 13030 / NBRC 101832 / S2 / LL), this protein is Diaminopimelate epimerase.